Reading from the N-terminus, the 541-residue chain is Membrane protein insertase YidC (541 aa).

5 consecutive transmembrane segments (helical) span residues 7-27, 346-368, 416-436, 454-474, and 495-515; these read LLVI…QLDY, IVQN…LYPL, LGGC…YWTF, LSAQ…MFLL, and PLIF…YWLV.

This sequence belongs to the OXA1/ALB3/YidC family. Type 1 subfamily. In terms of assembly, interacts with the Sec translocase complex via SecD. Specifically interacts with transmembrane segments of nascent integral membrane proteins during membrane integration.

The protein resides in the cell inner membrane. Required for the insertion and/or proper folding and/or complex formation of integral membrane proteins into the membrane. Involved in integration of membrane proteins that insert both dependently and independently of the Sec translocase complex, as well as at least some lipoproteins. Aids folding of multispanning membrane proteins. The polypeptide is Membrane protein insertase YidC (Pasteurella multocida (strain Pm70)).